Here is a 1233-residue protein sequence, read N- to C-terminus: Protein Jumonji (1233 aa).

Residues 1 to 10 (MSKERPKRNI) are compositionally biased toward basic residues. Disordered regions lie at residues 1-22 (MSKE…DGIP), 65-148 (NGQS…LSKR), 165-335 (PALP…VKYT), 355-379 (ETKL…ESSN), 423-451 (EGLR…MKGA), and 466-542 (KPLL…GWGM). The segment covering 84–96 (SQVSSTSNDISSS) has biased composition (low complexity). The Nuclear localization signal motif lies at 102-108 (PSRKRPR). Polar residues predominate over residues 115 to 127 (FAQSQPNSPSTTP). Residues 139 to 168 (ATQISDLSKRKPKTEDFLTFLCLRGSPALP) form a sufficient for interaction with the PRC2 complex region. The segment covering 178–191 (QDDEDEEEEEEETE) has biased composition (acidic residues). 2 stretches are compositionally biased toward polar residues: residues 195-208 (TATN…QSTP) and 216-228 (QVPN…GSSK). Residues 229–262 (SLKEKEPAQKHKSKEATPGKEKNSEHKAESRKDQ) are compositionally biased toward basic and acidic residues. Residues 268–285 (HPTTNTGSSTKGLTANNH) are compositionally biased toward polar residues. Low complexity predominate over residues 309 to 318 (SSPSANAASA). Positions 365-379 (SPVNHTISGKLESSN) are enriched in polar residues. Composition is skewed to basic and acidic residues over residues 423 to 440 (EGLR…HIDK) and 473 to 485 (LKKE…LERN). The segment covering 506-519 (ENASCENRSTSQAE) has biased composition (polar residues). Basic and acidic residues predominate over residues 520–535 (SLHKPQDSMGKHEKGS). Residues 546 to 587 (IPILRPSTKEFHDPLIYIESVRAQVEKYGMCRVIPPPDWRPE) enclose the JmjN domain. The 93-residue stretch at 610–702 (WGPNVQRLAC…YLLSYDSLSP (93 aa)) folds into the ARID domain. The GSGFP motif signature appears at 863–867 (GSGFP). One can recognise a JmjC domain in the interval 873-1037 (PFSRHGWNLT…MGFKTAKEMK (165 aa)). Positions 1197–1233 (ENCISKPTPKRGPRKRATVDVPSSRLSSSSSSKSASS) are disordered. Residues 1219 to 1233 (SSRLSSSSSSKSASS) show a composition bias toward low complexity.

The protein belongs to the JARID2 family. In terms of assembly, associates with the PRC2 complex.

Its subcellular location is the nucleus. Functionally, regulator of histone methyltransferase complexes that plays an essential role in embryonic development, including heart and liver development, neural tube fusion process and hematopoiesis. Acts as an accessory subunit for the core PRC2 (Polycomb repressive complex 2) complex, which mediates histone H3K27 (H3K27me3) trimethylation on chromatin. Binds DNA and mediates the recruitment of the PRC2 complex to target genes in embryonic stem cells, thereby playing a key role in stem cell differentiation and normal embryonic development. In cardiac cells, it is required to repress expression of cyclin-D1 (CCND1) by activating methylation of 'Lys-9' of histone H3 (H3K9me) by the GLP1/EHMT1 and G9a/EHMT2 histone methyltransferases. Also acts as a transcriptional repressor of ANF via its interaction with GATA4 and NKX2-5. Participates in the negative regulation of cell proliferation signaling. Does not have histone demethylase activity. The chain is Protein Jumonji (JARID2) from Gallus gallus (Chicken).